Consider the following 525-residue polypeptide: NADH-quinone oxidoreductase subunit N (525 aa).

A run of 14 helical transmembrane segments spans residues leucine 26–alanine 46, valine 53–leucine 73, proline 90–alanine 110, valine 143–alanine 163, leucine 167–leucine 187, tyrosine 202–glycine 222, leucine 246–phenylalanine 266, proline 278–leucine 298, proline 314–glutamine 334, leucine 341–isoleucine 361, methionine 368–valine 388, leucine 411–phenylalanine 431, leucine 449–valine 469, and proline 487–alanine 507.

Belongs to the complex I subunit 2 family. In terms of assembly, NDH-1 is composed of 14 different subunits. Subunits NuoA, H, J, K, L, M, N constitute the membrane sector of the complex.

The protein resides in the cell membrane. The catalysed reaction is a quinone + NADH + 5 H(+)(in) = a quinol + NAD(+) + 4 H(+)(out). In terms of biological role, NDH-1 shuttles electrons from NADH, via FMN and iron-sulfur (Fe-S) centers, to quinones in the respiratory chain. The immediate electron acceptor for the enzyme in this species is believed to be a menaquinone. Couples the redox reaction to proton translocation (for every two electrons transferred, four hydrogen ions are translocated across the cytoplasmic membrane), and thus conserves the redox energy in a proton gradient. This chain is NADH-quinone oxidoreductase subunit N, found in Parafrankia sp. (strain EAN1pec).